Reading from the N-terminus, the 207-residue chain is Ion-translocating oxidoreductase complex subunit G (207 aa).

Residues 11 to 31 (GILLGFIALLCTIISTGIFFL) traverse the membrane as a helical segment. The residue at position 175 (T175) is an FMN phosphoryl threonine.

Belongs to the RnfG family. As to quaternary structure, the complex is composed of six subunits: RnfA, RnfB, RnfC, RnfD, RnfE and RnfG. It depends on FMN as a cofactor.

It is found in the cell inner membrane. In terms of biological role, part of a membrane-bound complex that couples electron transfer with translocation of ions across the membrane. The chain is Ion-translocating oxidoreductase complex subunit G from Haemophilus influenzae (strain 86-028NP).